We begin with the raw amino-acid sequence, 164 residues long: MTCQTYNLFVLSVIMIYYGHTASSLNLVQLQDDIDKLKADFNSSHSDVADGGPIIVEKLKNWTERNEKRIILSQIVSMYLEMLENTDKSKPHIKHISEELYTLKNNLPDGVKKVKDIMDLAKLRMNDLRIQRKAANELFSVLQKLVDPPSSKRKRSQSQRKCNC.

Positions 1 to 19 (MTCQTYNLFVLSVIMIYYG) are cleaved as a signal peptide. N-linked (GlcNAc...) asparagine glycosylation is found at Asn-42 and Asn-61.

It belongs to the type II (or gamma) interferon family. In terms of assembly, homodimer.

It is found in the secreted. Produced by lymphocytes activated by specific antigens or mitogens. IFN-gamma, in addition to having antiviral activity, has important immunoregulatory functions. It is a potent activator of macrophages, it has antiproliferative effects on transformed cells and it can potentiate the antiviral and antitumor effects of the type I interferons. This chain is Interferon gamma (IFNG), found in Phasianus colchicus colchicus (Black-necked pheasant).